The sequence spans 97 residues: Antitoxin TacA2 (97 aa).

Belongs to the TacA antitoxin family. Homodimer. Forms a complex with cognate toxin TacT2.

In terms of biological role, antitoxin component of a type II toxin-antitoxin (TA) system. Counteracts the toxic effect of cognate toxin TacT2. Its function is as follows. The TacA2-TacT2 complex both represses and derepresses expression of its own operon. The chain is Antitoxin TacA2 from Salmonella enteritidis.